A 321-amino-acid chain; its full sequence is tRNA(Ile)-lysidine synthase (321 aa).

An ATP-binding site is contributed by 30 to 35 (SGGSDS).

This sequence belongs to the tRNA(Ile)-lysidine synthase family.

The protein localises to the cytoplasm. It catalyses the reaction cytidine(34) in tRNA(Ile2) + L-lysine + ATP = lysidine(34) in tRNA(Ile2) + AMP + diphosphate + H(+). Functionally, ligates lysine onto the cytidine present at position 34 of the AUA codon-specific tRNA(Ile) that contains the anticodon CAU, in an ATP-dependent manner. Cytidine is converted to lysidine, thus changing the amino acid specificity of the tRNA from methionine to isoleucine. In Chlamydia trachomatis serovar D (strain ATCC VR-885 / DSM 19411 / UW-3/Cx), this protein is tRNA(Ile)-lysidine synthase.